A 310-amino-acid chain; its full sequence is tRNA-cytidine(32) 2-sulfurtransferase (310 aa).

A PP-loop motif motif is present at residues 47–52; it reads SGGKDS. Residues cysteine 122, cysteine 125, and cysteine 213 each contribute to the [4Fe-4S] cluster site.

This sequence belongs to the TtcA family. In terms of assembly, homodimer. Requires Mg(2+) as cofactor. [4Fe-4S] cluster is required as a cofactor.

It localises to the cytoplasm. The enzyme catalyses cytidine(32) in tRNA + S-sulfanyl-L-cysteinyl-[cysteine desulfurase] + AH2 + ATP = 2-thiocytidine(32) in tRNA + L-cysteinyl-[cysteine desulfurase] + A + AMP + diphosphate + H(+). Its pathway is tRNA modification. Its function is as follows. Catalyzes the ATP-dependent 2-thiolation of cytidine in position 32 of tRNA, to form 2-thiocytidine (s(2)C32). The sulfur atoms are provided by the cysteine/cysteine desulfurase (IscS) system. The chain is tRNA-cytidine(32) 2-sulfurtransferase from Haemophilus influenzae (strain 86-028NP).